Consider the following 286-residue polypeptide: tRNA (guanine-N(1)-)-methyltransferase (286 aa).

Residues G116 and 140 to 145 (IGDYVL) contribute to the S-adenosyl-L-methionine site. Residues 232-286 (DALPPGSLTPHEEALAAEARLHAGRSAETPPPAGAAGSQAEGPPGTSPSDAAVAH) are disordered.

It belongs to the RNA methyltransferase TrmD family. Homodimer.

The protein resides in the cytoplasm. The catalysed reaction is guanosine(37) in tRNA + S-adenosyl-L-methionine = N(1)-methylguanosine(37) in tRNA + S-adenosyl-L-homocysteine + H(+). In terms of biological role, specifically methylates guanosine-37 in various tRNAs. This is tRNA (guanine-N(1)-)-methyltransferase from Acidothermus cellulolyticus (strain ATCC 43068 / DSM 8971 / 11B).